A 167-amino-acid polypeptide reads, in one-letter code: cAMP-dependent protein kinase type I-alpha regulatory subunit (167 aa).

Threonine 12 is subject to Phosphothreonine. 2 positions are modified to phosphoserine: serine 14 and serine 20. A Pseudophosphorylation motif motif is present at residues 30–33; it reads RGAI. Residue serine 34 is modified to Phosphoserine. 3',5'-cyclic AMP is bound by residues 51–78, 79–167, glutamate 147, and arginine 156; these read LFSHLDDNERILMGSTLRMYEEFLSKVS and ILES…ILKR. At serine 82 the chain carries Phosphoserine.

It belongs to the cAMP-dependent kinase regulatory chain family. The inactive holoenzyme is composed of two regulatory chains and two catalytic chains. Activation by cAMP releases the two active catalytic monomers and the regulatory dimer. Interacts with PRKACA and PRKACB. PRKAR1A also interacts with RFC2; the complex may be involved in cell survival. Interacts with AKAP4. Interacts with RARA; the interaction occurs in the presence of cAMP or FSH and regulates RARA transcriptional activity. Interacts with the phosphorylated form of PJA2. Interacts with CBFA2T3. Interacts with PRKX; regulates this cAMP-dependent protein kinase. Interacts with smAKAP; this interaction may target PRKAR1A to the plasma membrane. Interacts with AICDA. The pseudophosphorylation site binds to the substrate-binding region of the catalytic chain, resulting in the inhibition of its activity.

It localises to the cell membrane. Functionally, regulatory subunit of the cAMP-dependent protein kinases involved in cAMP signaling in cells. The protein is cAMP-dependent protein kinase type I-alpha regulatory subunit of Mesocricetus auratus (Golden hamster).